Reading from the N-terminus, the 364-residue chain is Probable dual-specificity RNA methyltransferase RlmN (364 aa).

The active-site Proton acceptor is Glu-107. One can recognise a Radical SAM core domain in the interval 113–346 (HNYGNSVCVT…VTIRREHGHD (234 aa)). An intrachain disulfide couples Cys-120 to Cys-351. [4Fe-4S] cluster is bound by residues Cys-127, Cys-131, and Cys-134. Residues 177–178 (GE), Ser-209, 232–234 (SLH), and Asn-308 each bind S-adenosyl-L-methionine. Cys-351 (S-methylcysteine intermediate) is an active-site residue.

The protein belongs to the radical SAM superfamily. RlmN family. [4Fe-4S] cluster is required as a cofactor.

Its subcellular location is the cytoplasm. It catalyses the reaction adenosine(2503) in 23S rRNA + 2 reduced [2Fe-2S]-[ferredoxin] + 2 S-adenosyl-L-methionine = 2-methyladenosine(2503) in 23S rRNA + 5'-deoxyadenosine + L-methionine + 2 oxidized [2Fe-2S]-[ferredoxin] + S-adenosyl-L-homocysteine. The catalysed reaction is adenosine(37) in tRNA + 2 reduced [2Fe-2S]-[ferredoxin] + 2 S-adenosyl-L-methionine = 2-methyladenosine(37) in tRNA + 5'-deoxyadenosine + L-methionine + 2 oxidized [2Fe-2S]-[ferredoxin] + S-adenosyl-L-homocysteine. In terms of biological role, specifically methylates position 2 of adenine 2503 in 23S rRNA and position 2 of adenine 37 in tRNAs. The polypeptide is Probable dual-specificity RNA methyltransferase RlmN (Geobacillus thermodenitrificans (strain NG80-2)).